The chain runs to 307 residues: MANITAAMVKDLREKTGAGMMDCKSALNETAGDIEAAVDWLRKKGLAKAAKKAGRVAAEGLVAVESAGRHAALVEVNSETDFVARNDGFQAFVREAAKVALNSQGNVESLEAAHFPGSQTTVKDRLQELIATIGENMTLRRVATLAVSQGVIATYVHGQVSEGLGKIGVLVALESAGNVEFLSTLGRQIAMHVAATNPLALDASGIDPATVERESAILREKNAGKPDHVLAKIVESGLKSYYKEVTLLDQPFVHDTSKTVSQVLKEAEGKAGGPVKLAAFVRYALGEGIEKEEGPDFASEVAAAVKG.

An involved in Mg(2+) ion dislocation from EF-Tu region spans residues threonine 80–valine 83.

It belongs to the EF-Ts family.

It is found in the cytoplasm. Functionally, associates with the EF-Tu.GDP complex and induces the exchange of GDP to GTP. It remains bound to the aminoacyl-tRNA.EF-Tu.GTP complex up to the GTP hydrolysis stage on the ribosome. This is Elongation factor Ts from Methylobacterium sp. (strain 4-46).